A 579-amino-acid chain; its full sequence is Zinc metalloproteinase nas-11 (579 aa).

An N-terminal signal peptide occupies residues 1-17 (MTPSLVFLIVVIVVVEG). A propeptide spanning residues 18-328 (QGWRPWDRFN…AAPGSSRLKK (311 aa)) is cleaved from the precursor. The tract at residues 35 to 58 (WGGNNWGTRQRNQEPHDIPPPVPP) is disordered. Asn-256 carries N-linked (GlcNAc...) asparagine glycosylation. A compositionally biased stretch (acidic residues) spans 293 to 312 (GDDEIPLPDADTDDEDDDDS). Residues 293–323 (GDDEIPLPDADTDDEDDDDSTNSASGAAPGS) are disordered. The Peptidase M12A domain maps to 329-536 (SALYFEGNLI…IELLKKMYCQ (208 aa)). Cystine bridges form between Cys-375–Cys-535, Cys-401–Cys-421, Cys-539–Cys-575, Cys-546–Cys-568, and Cys-555–Cys-572. Position 430 (His-430) interacts with Zn(2+). Glu-431 is an active-site residue. 2 residues coordinate Zn(2+): His-434 and His-440. The N-linked (GlcNAc...) asparagine glycan is linked to Asn-454. The region spanning 539–575 (CDDKNVYCGAWALKDLCKNPGHDQYMAANCKKSCGLC) is the ShKT domain.

It depends on Zn(2+) as a cofactor. Expressed in the anterior part of the intestine, CEP neurons and to a lesser extent in hypodermis.

The protein localises to the secreted. Metalloprotease. In Caenorhabditis elegans, this protein is Zinc metalloproteinase nas-11 (nas-11).